Reading from the N-terminus, the 499-residue chain is Multiphosphoryl transfer protein (499 aa).

Residues 2–142 (LELSESNIHL…AEFCAILMGE (141 aa)) enclose the PTS EIIA type-2 domain. Residue His-62 is the Tele-phosphohistidine intermediate; for EIIA activity of the active site. His-62 is subject to Phosphohistidine; by HPr. The m domain stretch occupies residues 155 to 285 (SLDVNTQSLL…SDVETQSVEG (131 aa)). The HPr 1 domain maps to 286 to 376 (AVVGTFTIRN…KAIANGLGEN (91 aa)). The Pros-phosphohistidine intermediate; for HPr 1 activity role is filled by His-300. Position 300 is a phosphohistidine (His-300). Positions 378-409 (SAVPPSEPDTIEIMGDQIHTPAVTEDDNLPAN) are linker. Residues 410–499 (AIEAVFVIKN…GAVIESGLGE (90 aa)) form the HPr 2 domain. Position 424 is a phosphohistidine (His-424). His-424 serves as the catalytic Pros-phosphohistidine intermediate; for HPr 2 activity.

It localises to the cytoplasm. In terms of biological role, the phosphoenolpyruvate-dependent sugar phosphotransferase system (sugar PTS), a major carbohydrate active transport system, catalyzes the phosphorylation of incoming sugar substrates concomitantly with their translocation across the cell membrane. The enzyme II FruAB PTS system is involved in fructose transport. This is Multiphosphoryl transfer protein (fruB) from Haemophilus influenzae (strain ATCC 51907 / DSM 11121 / KW20 / Rd).